The chain runs to 485 residues: Glutamyl-tRNA(Gln) amidotransferase subunit A (485 aa).

Catalysis depends on charge relay system residues lysine 78 and serine 153. The Acyl-ester intermediate role is filled by serine 177.

Belongs to the amidase family. GatA subfamily. In terms of assembly, heterotrimer of A, B and C subunits.

It catalyses the reaction L-glutamyl-tRNA(Gln) + L-glutamine + ATP + H2O = L-glutaminyl-tRNA(Gln) + L-glutamate + ADP + phosphate + H(+). In terms of biological role, allows the formation of correctly charged Gln-tRNA(Gln) through the transamidation of misacylated Glu-tRNA(Gln) in organisms which lack glutaminyl-tRNA synthetase. The reaction takes place in the presence of glutamine and ATP through an activated gamma-phospho-Glu-tRNA(Gln). The sequence is that of Glutamyl-tRNA(Gln) amidotransferase subunit A from Pelobacter propionicus (strain DSM 2379 / NBRC 103807 / OttBd1).